The sequence spans 517 residues: Probable anion transporter 6, chloroplastic (517 aa).

A disordered region spans residues 51–73 (TERVRESKKLPPKDPIEDPKPQL). The span at 52–70 (ERVRESKKLPPKDPIEDPK) shows a compositional bias: basic and acidic residues. The next 10 membrane-spanning stretches (helical) occupy residues 130 to 150 (FGWS…GYAL), 170 to 190 (IGVF…GFMP), 229 to 249 (FVFG…PPII), 255 to 275 (ESVF…FQFL), 312 to 332 (SFFQ…GSWG), 352 to 372 (LTEA…VTSL), 397 to 417 (IAFV…GLPP), 420 to 440 (IVGI…GLYC), 452 to 472 (ILLG…VALT), and 484 to 504 (MSLF…WLAF).

Belongs to the major facilitator superfamily. Sodium/anion cotransporter (TC 2.A.1.14) family. As to expression, expressed in leaf veins and sepals.

Its subcellular location is the plastid. The protein localises to the chloroplast membrane. In terms of biological role, inorganic phosphate and probable anion transporter. The chain is Probable anion transporter 6, chloroplastic (ANTR6) from Arabidopsis thaliana (Mouse-ear cress).